Here is a 629-residue protein sequence, read N- to C-terminus: tRNA uridine 5-carboxymethylaminomethyl modification enzyme MnmG (629 aa).

Residues 15 to 20 (GAGHAG), valine 127, and serine 182 each bind FAD. Residues 203–227 (TPPRVKSSTIDYSKTEEQPGDDHPR) are disordered. Residues 215–227 (SKTEEQPGDDHPR) show a composition bias toward basic and acidic residues. 274–288 (GARYCPSIEDKIVRF) serves as a coordination point for NAD(+). Glutamine 371 is an FAD binding site.

Belongs to the MnmG family. In terms of assembly, homodimer. Heterotetramer of two MnmE and two MnmG subunits. Requires FAD as cofactor.

The protein resides in the cytoplasm. Its function is as follows. NAD-binding protein involved in the addition of a carboxymethylaminomethyl (cmnm) group at the wobble position (U34) of certain tRNAs, forming tRNA-cmnm(5)s(2)U34. The chain is tRNA uridine 5-carboxymethylaminomethyl modification enzyme MnmG from Listeria welshimeri serovar 6b (strain ATCC 35897 / DSM 20650 / CCUG 15529 / CIP 8149 / NCTC 11857 / SLCC 5334 / V8).